The chain runs to 306 residues: MTFTPGQAEVFTEIEKIGQLTRAMRKAGRPVALVPTMGALHEGHLSLVQAAQQIPGALVVVSIFVNPLQFAEGEDLDAYPRTLDEDVAKLKAAGVDAVFAPSPREMYPNGPRTTIHPGEAGRILEGAHRPTHFAGVLTVVNKLFTITHCDHAFFGEKDYQQLLLIQQIVTDLNMEVQVHGVPIVREADGLAKSSRNVYLSDEERELALTLSAALTAGAFVAEQGPAAVLQTAGSILDAASGIDVDYLELRGTDLSDTPEDGEARLLVAARVGTTRLIDNVGVPLGTGFKGLDDGGEGSAPADNAGE.

Met37 to His44 lines the ATP pocket. His44 (proton donor) is an active-site residue. Gln69 serves as a coordination point for (R)-pantoate. A beta-alanine-binding site is contributed by Gln69. ATP is bound at residue Gly155–Asp158. Gln161 is a binding site for (R)-pantoate. Residues Val184 and Lys192 to Arg195 each bind ATP.

It belongs to the pantothenate synthetase family. Homodimer.

It localises to the cytoplasm. It catalyses the reaction (R)-pantoate + beta-alanine + ATP = (R)-pantothenate + AMP + diphosphate + H(+). Its pathway is cofactor biosynthesis; (R)-pantothenate biosynthesis; (R)-pantothenate from (R)-pantoate and beta-alanine: step 1/1. Its function is as follows. Catalyzes the condensation of pantoate with beta-alanine in an ATP-dependent reaction via a pantoyl-adenylate intermediate. The protein is Pantothenate synthetase of Corynebacterium jeikeium (strain K411).